Consider the following 1365-residue polypeptide: Killer toxin-resistance protein 5 (1365 aa).

A signal peptide spans 1-17 (MRLLALVLLLLCAPLRA). N-linked (GlcNAc...) asparagine glycosylation is found at Asn-115, Asn-228, Asn-293, Asn-457, Asn-519, Asn-523, Asn-644, Asn-870, Asn-1091, Asn-1150, and Asn-1195. The tract at residues 1334-1365 (FASSPGDEDVPGESVSSKYQDSDNAAPLHDEL) is disordered. Polar residues predominate over residues 1347 to 1356 (SVSSKYQDSD). The Prevents secretion from ER signature appears at 1362–1365 (HDEL).

The protein to D.melanogaster UGGG.

Its subcellular location is the endoplasmic reticulum lumen. Its function is as follows. Required for (1-&gt;6)-beta-D-glucan synthesis and normal cell growth. The chain is Killer toxin-resistance protein 5 (KRE5) from Saccharomyces cerevisiae (strain ATCC 204508 / S288c) (Baker's yeast).